Reading from the N-terminus, the 902-residue chain is Proline-rich transmembrane protein 4 (902 aa).

The N-terminal stretch at 1–18 (MAGRSCLELGLFCWVLLA) is a signal peptide. Disordered stretches follow at residues 72 to 92 (TETHPLSPGLGQESEEEEEGD), 121 to 149 (TPWASSLPPESTSRLSGPTKRPTAHSQPR), and 281 to 333 (SPSS…LLDD). 2 stretches are compositionally biased toward polar residues: residues 122–136 (PWASSLPPESTSRLS) and 281–302 (SPSSASVKTTPVQQDPTVSTSG). 5 consecutive transmembrane segments (helical) span residues 371–391 (AGALFGLVALLALLALALLPW), 393–413 (CPPGAPCLALLDLLLLSAGTT), 432–452 (LVWLLLQDLPLPCLAAGLGLA), 468–488 (LAALLLLGLGLAAAAALGSAV), and 501–521 (GLHAFLAAFLSGLLLALSCWG). Position 642 is a phosphoserine (serine 642). Disordered stretches follow at residues 701 to 723 (AGANPTQSTASSPSSDCTVDFRP), 774 to 811 (AGPSEKSENVPGSPAPPELPSPGAWPPGSSASSGSLCG), and 839 to 872 (PPRPSESSPSLPASGSYQALSPPSRDSPEHASEL). Polar residues predominate over residues 704-717 (NPTQSTASSPSSDC). A compositionally biased stretch (pro residues) spans 786–798 (SPAPPELPSPGAW). Composition is skewed to low complexity over residues 799–811 (PPGSSASSGSLCG) and 843–854 (SESSPSLPASGS).

It is found in the membrane. This chain is Proline-rich transmembrane protein 4 (Prrt4), found in Mus musculus (Mouse).